The sequence spans 297 residues: 33 kDa chaperonin (297 aa).

Disulfide bonds link C239/C241 and C272/C275.

The protein belongs to the HSP33 family. Under oxidizing conditions two disulfide bonds are formed involving the reactive cysteines. Under reducing conditions zinc is bound to the reactive cysteines and the protein is inactive.

The protein localises to the cytoplasm. In terms of biological role, redox regulated molecular chaperone. Protects both thermally unfolding and oxidatively damaged proteins from irreversible aggregation. Plays an important role in the bacterial defense system toward oxidative stress. The chain is 33 kDa chaperonin from Synechococcus elongatus (strain ATCC 33912 / PCC 7942 / FACHB-805) (Anacystis nidulans R2).